The following is a 1271-amino-acid chain: Zinc finger transcription factor Trps1 (1271 aa).

Disordered regions lie at residues 1-76 (MVRK…DSAS) and 124-155 (SPIK…DMSP). The span at 34–49 (SKEISTDPMQENSEQS) shows a compositional bias: polar residues. Residues 54–65 (HNSDDHSFHDQE) show a composition bias toward basic and acidic residues. Positions 66 to 76 (PSSSINKDSAS) are enriched in polar residues. A C2H2-type 1; atypical zinc finger spans residues 217–242 (FKCNICGYGYYGNDPTDLIKHFRKYH). The segment at 328 to 353 (FRCKFCNFTYLAKSATELEQHFLKTH) adopts a C2H2-type 2; atypical zinc-finger fold. A disordered region spans residues 353 to 387 (HPNKMKMSSDSGKPSEKSTNKSSPIPRSCEPGDLG). Residues 426–451 (YWCKFCSFSCESSSNSKLLEHHSKQH) form a C2H2-type 3; atypical zinc finger. The segment at 513–543 (YNCQFCDFRYSKSHGPEVILVGPLLRHYQQH) adopts a C2H2-type 4; atypical zinc-finger fold. 3 C2H2-type zinc fingers span residues 604–627 (HQCD…ENAH), 656–679 (HSCT…RRVH), and 682–705 (YKCR…NSAH). The tract at residues 843 to 877 (GVTAGASGEKSGQHTPQYPTAGDSKSKDESQSLLR) is disordered. The segment at 886-910 (CANCLTTKTSLWRKNANGGYVCNAC) adopts a GATA-type zinc-finger fold. Disordered stretches follow at residues 938–987 (RTRK…RENQ), 1031–1064 (SPQE…YMRP), and 1154–1196 (LDLA…EKSD). Over residues 972 to 985 (IRSEDHSMEGHQRE) the composition is skewed to basic and acidic residues. Over residues 1031-1049 (SPQESSGEPGNSSSVSDGK) the composition is skewed to low complexity. Basic and acidic residues-rich tracts occupy residues 1050–1062 (GSSE…EKYM) and 1170–1196 (DSKE…EKSD). Positions 1153 to 1271 (PLDLAMKHSR…QAEKNGKNKD (119 aa)) are transcriptional repressor domain. Residues K1182 and K1191 each participate in a glycyl lysine isopeptide (Lys-Gly) (interchain with G-Cter in SUMO) cross-link. C2H2-type zinc fingers lie at residues 1205 to 1227 (TKCV…MSCH) and 1233 to 1257 (FQCS…RGLH).

As to quaternary structure, binds specifically to GATA sequences. In terms of processing, sumoylated. Sumoylation in the repressor domain inhibits the transcription repression activity. Sumoylation on Lys-1191 is the major site. Appears to be sumoylated on multiple sites.

The protein resides in the nucleus. Functionally, transcriptional repressor. Represses expression of GATA-regulated genes at selected sites and stages in vertebrate development. The sequence is that of Zinc finger transcription factor Trps1 (trps1) from Xenopus laevis (African clawed frog).